An 808-amino-acid chain; its full sequence is MSHPQSPAMADLKRLEAAADRAARAIPPVWPLASSVAVNPFLGQTSESLATAGARLARVAGVAVTMPRRWFHDRISAGVISDEDLLEAWLSAPRDLRPADLAALKAAAASDTPKPRALPSIADLAADVSGVDWPGLIAERFGAWAAGYFDEGQALWAAPHGKGAFAAWQAVTTHDLTPEIAGLRGFAFHVSEAPDSALAVIARAAERLGLKQAAMDSYFHQMLMTLGGWAQYARYALWQAELAGGSDQTITDLLAIRLIWEEALWLRYAPQIAARWASVSAAHGAPIAATPDLVTDAILQEAAERAAQRALANTLAKPAIAAIADRPALQAAFCIDVRSEVFRRALESVNPKVQTLGFAGFFGLATAHRRLASDIDELRLPVLLNPALRSCAGGPDVASRDRSERVKARATRAWGRFKFAAVSSFAFVEATGPIYVGKLVTDALGLRPAPAANDPAPLLSPALDLADRTRAAAAVLRAMSLTDRFARLVVLAGHGANVVNNPHASGLQCGACGGYSGEVNARLLAALLNDTKVRAGLTPDGIAIPADTLFLAALHDTTTDAVTLYADDHPSAAHQHDISQARIWFAAAGKLARGERALRLPRAAHQGSVARRGRDWAETRPEWSLAGCKAFIAAPRTRTTGRSLDGRAFLHDYDWKQDTSFGVLELILTAPVVVASWISLQYYGSTVAPEIFGAGNKLLHNVTGGIGVVEGNGGLLRAGLPWQSVHDGASYAHDPLRLSVCIEAPREAISDVLSRHDNVRALFDNGWLHLFALDEAGRMAWRYAGDLQWSAMSPVEAADPQPRLKVAV.

Positions 334, 336, 494, and 509 each coordinate Zn(2+).

The protein belongs to the inorganic carbon transporter (TC 9.A.2) DabA family. In terms of assembly, forms a complex with DabB. The cofactor is Zn(2+).

Its subcellular location is the cell inner membrane. Functionally, part of an energy-coupled inorganic carbon pump. The protein is Probable inorganic carbon transporter subunit DabA of Rhodopseudomonas palustris (strain BisB5).